Here is a 544-residue protein sequence, read N- to C-terminus: Membrane protein insertase YidC (544 aa).

5 helical membrane passes run 6–26, 345–365, 423–443, 460–480, and 503–523; these read NILL…WQTD, LLMF…LITL, GGCL…WVLL, LSVQ…MFVM, and VVFT…WLVG.

It belongs to the OXA1/ALB3/YidC family. Type 1 subfamily. As to quaternary structure, interacts with the Sec translocase complex via SecD. Specifically interacts with transmembrane segments of nascent integral membrane proteins during membrane integration.

Its subcellular location is the cell inner membrane. Its function is as follows. Required for the insertion and/or proper folding and/or complex formation of integral membrane proteins into the membrane. Involved in integration of membrane proteins that insert both dependently and independently of the Sec translocase complex, as well as at least some lipoproteins. Aids folding of multispanning membrane proteins. This Shewanella woodyi (strain ATCC 51908 / MS32) protein is Membrane protein insertase YidC.